The following is a 202-amino-acid chain: Imidazole glycerol phosphate synthase subunit HisH 2 (202 aa).

A Glutamine amidotransferase type-1 domain is found at 1–202 (MIAIIDYGMG…KLMENFIKQA (202 aa)). Residue Cys80 is the Nucleophile of the active site. Active-site residues include His183 and Glu185.

As to quaternary structure, heterodimer of HisH and HisF.

The protein resides in the cytoplasm. The catalysed reaction is 5-[(5-phospho-1-deoxy-D-ribulos-1-ylimino)methylamino]-1-(5-phospho-beta-D-ribosyl)imidazole-4-carboxamide + L-glutamine = D-erythro-1-(imidazol-4-yl)glycerol 3-phosphate + 5-amino-1-(5-phospho-beta-D-ribosyl)imidazole-4-carboxamide + L-glutamate + H(+). It catalyses the reaction L-glutamine + H2O = L-glutamate + NH4(+). Its pathway is amino-acid biosynthesis; L-histidine biosynthesis; L-histidine from 5-phospho-alpha-D-ribose 1-diphosphate: step 5/9. IGPS catalyzes the conversion of PRFAR and glutamine to IGP, AICAR and glutamate. The HisH subunit provides the glutamine amidotransferase activity that produces the ammonia necessary to HisF for the synthesis of IGP and AICAR. This is Imidazole glycerol phosphate synthase subunit HisH 2 (hisH2) from Methanococcus maripaludis (strain DSM 14266 / JCM 13030 / NBRC 101832 / S2 / LL).